The chain runs to 465 residues: Hepatocyte nuclear factor 6 (465 aa).

Disordered regions lie at residues glycine 15–histidine 84 and serine 119–leucine 141. A compositionally biased stretch (basic residues) spans proline 123–arginine 140. The CUT DNA-binding region spans glycine 283 to alanine 369. The segment at residues proline 385–tryptophan 444 is a DNA-binding region (homeobox). Residues aspartate 442–alanine 465 form a disordered region. Positions glycine 448–alanine 465 are enriched in low complexity.

This sequence belongs to the CUT homeobox family. As to quaternary structure, binds DNA as a monomer. Expressed in liver, brain, spleen and testis.

The protein resides in the nucleus. In terms of biological role, transcriptional activator. Binds the consensus sequence 5'-DHWATTGAYTWWD-3' on a variety of gene promoters such as those of HNF3B and TTR. Important for liver genes transcription. The affinity of HNF-6-alpha and HNF-6-beta for DNA differs depending on the target sequence. The chain is Hepatocyte nuclear factor 6 (Onecut1) from Rattus norvegicus (Rat).